The following is a 533-amino-acid chain: Protein translocase subunit SecD (533 aa).

Helical transmembrane passes span 8 to 28 (ALLV…TFVS), 377 to 397 (IVGG…GGVV), 400 to 420 (LALA…GFTL), 422 to 442 (LPGI…NVLI), 469 to 489 (LTIL…LQFG), and 495 to 515 (GFAV…IFVT).

The protein belongs to the SecD/SecF family. SecD subfamily. As to quaternary structure, forms a complex with SecF. Part of the essential Sec protein translocation apparatus which comprises SecA, SecYEG and auxiliary proteins SecDF-YajC and YidC.

Its subcellular location is the cell inner membrane. In terms of biological role, part of the Sec protein translocase complex. Interacts with the SecYEG preprotein conducting channel. SecDF uses the proton motive force (PMF) to complete protein translocation after the ATP-dependent function of SecA. In Syntrophobacter fumaroxidans (strain DSM 10017 / MPOB), this protein is Protein translocase subunit SecD.